The following is a 261-amino-acid chain: Pantothenate synthetase (261 aa).

Residue 29–36 (MGALHNGH) coordinates ATP. The active-site Proton donor is the His36. Gln60 lines the (R)-pantoate pocket. Beta-alanine is bound at residue Gln60. 147–150 (GEKD) is a binding site for ATP. (R)-pantoate is bound at residue Gln153. 184 to 187 (LSSR) contacts ATP.

This sequence belongs to the pantothenate synthetase family. Homodimer.

The protein localises to the cytoplasm. It catalyses the reaction (R)-pantoate + beta-alanine + ATP = (R)-pantothenate + AMP + diphosphate + H(+). Its pathway is cofactor biosynthesis; (R)-pantothenate biosynthesis; (R)-pantothenate from (R)-pantoate and beta-alanine: step 1/1. Catalyzes the condensation of pantoate with beta-alanine in an ATP-dependent reaction via a pantoyl-adenylate intermediate. The protein is Pantothenate synthetase of Francisella philomiragia subsp. philomiragia (strain ATCC 25017 / CCUG 19701 / FSC 153 / O#319-036).